Here is a 360-residue protein sequence, read N- to C-terminus: Ethanolamine-phosphate cytidylyltransferase (360 aa).

CTP-binding positions include 207–208 (GF), 215–218 (HTEA), K243, 291–294 (HGDD), and 321–325 (HTEGL).

Belongs to the cytidylyltransferase family.

The enzyme catalyses phosphoethanolamine + CTP + H(+) = CDP-ethanolamine + diphosphate. It participates in phospholipid metabolism; phosphatidylethanolamine biosynthesis; phosphatidylethanolamine from ethanolamine: step 2/3. Functionally, ethanolamine-phosphate cytidylyltransferase that catalyzes the second step in the synthesis of phosphatidylethanolamine (PE) from ethanolamine via the CDP-ethanolamine pathway. The sequence is that of Ethanolamine-phosphate cytidylyltransferase (pctA) from Dictyostelium discoideum (Social amoeba).